A 723-amino-acid chain; its full sequence is ATP-dependent zinc metalloprotease YME1 homolog (723 aa).

The helical transmembrane segment at 198–220 (LTRFYIFLVFCIFFGYLTGRIRV) threads the bilayer. 288 to 295 (GPPGTGKT) serves as a coordination point for ATP. Histidine 509 is a binding site for Zn(2+). Glutamate 510 is a catalytic residue. Residues histidine 513 and aspartate 587 each contribute to the Zn(2+) site.

It in the N-terminal section; belongs to the AAA ATPase family. The protein in the C-terminal section; belongs to the peptidase M41 family. Zn(2+) serves as cofactor.

The protein localises to the mitochondrion inner membrane. The protein resides in the mitochondrion. Its function is as follows. ATP-dependent metalloprotease that catalyzes the degradation of folded and unfolded proteins with a suitable degron sequence in the mitochondrial intermembrane region. Plays an important role in regulating mitochondrial morphology and function. The sequence is that of ATP-dependent zinc metalloprotease YME1 homolog (ymel-1) from Caenorhabditis elegans.